The chain runs to 801 residues: Transferrin receptor protein 2 (801 aa).

The Cytoplasmic portion of the chain corresponds to 1–83 (MERLWGLFQR…WAAAGRRAAP (83 aa)). The interval 16 to 45 (PRSSQTVYQRVEGPRKGHLEEEEEDGEEGA) is disordered. The Endocytosis signal signature appears at 23–26 (YQRV). Positions 35-45 (EEEEEDGEEGA) are enriched in acidic residues. Residues 84-104 (YLVLTALLIFTGAFLLGYVAF) form a helical; Signal-anchor for type II membrane protein membrane-spanning segment. The Extracellular segment spans residues 105–801 (RGSCQACGDS…GDVWNIDNNF (697 aa)). N240, N339, N540, and N754 each carry an N-linked (GlcNAc...) asparagine glycan.

This sequence belongs to the peptidase M28 family. M28B subfamily. In terms of assembly, homodimer. In terms of tissue distribution, predominantly expressed in liver. While the alpha form is also expressed in spleen, lung, muscle, prostate and peripheral blood mononuclear cells, the beta form is expressed in all tissues tested, albeit weakly.

Its subcellular location is the cell membrane. The protein resides in the cytoplasm. Functionally, mediates cellular uptake of transferrin-bound iron in a non-iron dependent manner. May be involved in iron metabolism, hepatocyte function and erythrocyte differentiation. This Homo sapiens (Human) protein is Transferrin receptor protein 2 (TFR2).